A 473-amino-acid polypeptide reads, in one-letter code: Inactive levansucrase (473 aa).

The signal sequence occupies residues 1 to 29 (MNIKKFAKQATVLTFTTALLAGGATQAFA).

Belongs to the glycosyl hydrolase 68 family.

The protein resides in the secreted. This chain is Inactive levansucrase (sacB), found in Geobacillus stearothermophilus (Bacillus stearothermophilus).